The following is a 131-amino-acid chain: Small ribosomal subunit protein uS11 (131 aa).

Belongs to the universal ribosomal protein uS11 family. In terms of assembly, part of the 30S ribosomal subunit. Interacts with proteins S7 and S18. Binds to IF-3.

Functionally, located on the platform of the 30S subunit, it bridges several disparate RNA helices of the 16S rRNA. Forms part of the Shine-Dalgarno cleft in the 70S ribosome. The polypeptide is Small ribosomal subunit protein uS11 (Helicobacter acinonychis (strain Sheeba)).